Here is a 250-residue protein sequence, read N- to C-terminus: Coproheme decarboxylase (250 aa).

Fe-coproporphyrin III is bound by residues Arg-131, 145 to 149 (YPMNK), His-172, and Gln-185. Tyr-145 is a catalytic residue.

The protein belongs to the ChdC family. Type 1 subfamily. Requires Fe-coproporphyrin III as cofactor.

It catalyses the reaction Fe-coproporphyrin III + 2 H2O2 + 2 H(+) = heme b + 2 CO2 + 4 H2O. The enzyme catalyses Fe-coproporphyrin III + H2O2 + H(+) = harderoheme III + CO2 + 2 H2O. It carries out the reaction harderoheme III + H2O2 + H(+) = heme b + CO2 + 2 H2O. The protein operates within porphyrin-containing compound metabolism; protoheme biosynthesis. Its function is as follows. Involved in coproporphyrin-dependent heme b biosynthesis. Catalyzes the decarboxylation of Fe-coproporphyrin III (coproheme) to heme b (protoheme IX), the last step of the pathway. The reaction occurs in a stepwise manner with a three-propionate intermediate. The chain is Coproheme decarboxylase from Staphylococcus aureus (strain MRSA252).